Reading from the N-terminus, the 426-residue chain is Serine--tRNA ligase (426 aa).

233–235 (TAE) is an L-serine binding site. 264 to 266 (RSE) lines the ATP pocket. Residue E287 participates in L-serine binding. 351–354 (EISS) is an ATP binding site. Residue S387 participates in L-serine binding.

Belongs to the class-II aminoacyl-tRNA synthetase family. Type-1 seryl-tRNA synthetase subfamily. As to quaternary structure, homodimer. The tRNA molecule binds across the dimer.

The protein resides in the cytoplasm. It catalyses the reaction tRNA(Ser) + L-serine + ATP = L-seryl-tRNA(Ser) + AMP + diphosphate + H(+). The catalysed reaction is tRNA(Sec) + L-serine + ATP = L-seryl-tRNA(Sec) + AMP + diphosphate + H(+). Its pathway is aminoacyl-tRNA biosynthesis; selenocysteinyl-tRNA(Sec) biosynthesis; L-seryl-tRNA(Sec) from L-serine and tRNA(Sec): step 1/1. Its function is as follows. Catalyzes the attachment of serine to tRNA(Ser). Is also able to aminoacylate tRNA(Sec) with serine, to form the misacylated tRNA L-seryl-tRNA(Sec), which will be further converted into selenocysteinyl-tRNA(Sec). The protein is Serine--tRNA ligase of Clostridium botulinum (strain 657 / Type Ba4).